An 892-amino-acid chain; its full sequence is Protein RRP6-like 3 (892 aa).

The region spanning 119 to 287 (YVWVETESQL…IADSLTTELK (169 aa)) is the 3'-5' exonuclease domain. Positions 350–436 (SLNAEELVRK…CSHLDDIYKM (87 aa)) constitute an HRDC domain. The segment at 785-811 (VDDSGDGTSEGDGAKELNDTQCNGNTL) is disordered.

The protein localises to the cytoplasm. Its subcellular location is the cytosol. The protein is Protein RRP6-like 3 of Arabidopsis thaliana (Mouse-ear cress).